A 636-amino-acid polypeptide reads, in one-letter code: Chaperone protein DnaK (636 aa).

The residue at position 198 (Thr198) is a Phosphothreonine; by autocatalysis. The tract at residues 598 to 636 (YAAKEQPGEHGETGSGEQARKESGKDENVVDADFEEVKK) is disordered. The segment covering 603 to 625 (QPGEHGETGSGEQARKESGKDEN) has biased composition (basic and acidic residues). Residues 626-636 (VVDADFEEVKK) are compositionally biased toward acidic residues.

The protein belongs to the heat shock protein 70 family.

Its function is as follows. Acts as a chaperone. This chain is Chaperone protein DnaK, found in Pelobacter propionicus (strain DSM 2379 / NBRC 103807 / OttBd1).